Consider the following 489-residue polypeptide: Tyrosine-protein phosphatase MSG5 (489 aa).

Residues 1-18 are compositionally biased toward basic and acidic residues; the sequence is MQFHSDKQHLDSKTDIDF. The disordered stretch occupies residues 1–30; that stretch reads MQFHSDKQHLDSKTDIDFKPNSPRSLQNRN. 3 positions are modified to phosphoserine: S22, S98, and S151. Position 178 is a phosphothreonine (T178). The Tyrosine-protein phosphatase domain occupies 233-375; sequence GPLLVLPPNL…LMEWGTMLSK (143 aa). Catalysis depends on C319, which acts as the Phosphocysteine intermediate. Disordered regions lie at residues 375–401 and 419–489; these read KNSP…VSST and LSSS…MFLP. The segment covering 419–450 has biased composition (low complexity); sequence LSSSPNDSSVNSSEVTPRTPATLTGARTALAT. A compositionally biased stretch (basic and acidic residues) spans 451-460; it reads ERGEDDEHCK.

This sequence belongs to the protein-tyrosine phosphatase family. Non-receptor class dual specificity subfamily.

It carries out the reaction O-phospho-L-tyrosyl-[protein] + H2O = L-tyrosyl-[protein] + phosphate. Dual specificity phosphatase that dephosphorylates MAP kinase FUS3 on both a Tyr and a Ser or Thr. Has a role in adaptation to pheromone. In Saccharomyces cerevisiae (strain ATCC 204508 / S288c) (Baker's yeast), this protein is Tyrosine-protein phosphatase MSG5 (MSG5).